The following is a 619-amino-acid chain: MPQLNGGGGDDLGANDELISFKDEGEQEEKSSENSSAERDLADVKSSLVNESETNQNSSSDSEAERRPPPRSESFRDKSRESLEEAAKRQDGGLFKGPPYPGYPFIMIPDLTSPYLPNGSLSPTARTLHFQSGSTHYSAYKTIEHQIAVQYLQMKWPLLDVQAGSLQSRQALKDARSPSPAHIVSNKVPVVQHPHHVHPLTPLITYSNEHFTPGNPPPHLPADVDPKTGIPRPPHPPDISPYYPLSPGTVGQIPHPLGWLVPQQGQPVYPITTGGFRHPYPTALTVNASMSRFPPHMVPPHHTLHTTGIPHPAIVTPTVKQESSQSDVGSLHSSKHQDSKKEEEKKKPHIKKPLNAFMLYMKEMRAKVVAECTLKESAAINQILGRRWHALSREEQAKYYELARKERQLHMQLYPGWSARDNYGKKKKRKRDKQPGETNEHSECFLNPCLSLPPITDLSAPKKCRARFGLDQQNNWCGPCRRKKKCVRYIQGEGSCLSPPSSDGSLLDSPPPSPNLLGSPPRDAKSQTEQTQPLSLSLKPDPLAHLSMMPPPPALLLAEATHKASALCPNGALDLPPAALQPAAPSSSIAQPSTSSLHSHSSLAGTQPQPLSLVTKSLE.

The segment covering 1–11 (MPQLNGGGGDD) has biased composition (gly residues). The CTNNB1-binding stretch occupies residues 1–53 (MPQLNGGGGDDLGANDELISFKDEGEQEEKSSENSSAERDLADVKSSLVNESE). The disordered stretch occupies residues 1-96 (MPQLNGGGGD…AKRQDGGLFK (96 aa)). Over residues 19–43 (ISFKDEGEQEEKSSENSSAERDLAD) the composition is skewed to basic and acidic residues. K22 participates in a covalent cross-link: Glycyl lysine isopeptide (Lys-Gly) (interchain with G-Cter in SUMO2). Residues 47–57 (SLVNESETNQN) show a composition bias toward polar residues. Basic and acidic residues predominate over residues 63-91 (EAERRPPPRSESFRDKSRESLEEAAKRQD). 2 positions are modified to phosphothreonine; by NLK: T201 and T212. A mediates interaction with MAD2L2 region spans residues 201–395 (TPLITYSNEH…RRWHALSREE (195 aa)). The span at 318 to 328 (TVKQESSQSDV) shows a compositional bias: polar residues. 4 disordered regions span residues 318 to 350 (TVKQ…KPHI), 420 to 441 (RDNY…TNEH), 496 to 547 (CLSP…AHLS), and 574 to 619 (DLPP…KSLE). K320 is covalently cross-linked (Glycyl lysine isopeptide (Lys-Gly) (interchain with G-Cter in SUMO)). Residues 335-346 (KHQDSKKEEEKK) are compositionally biased toward basic and acidic residues. Positions 350 to 418 (IKKPLNAFML…LHMQLYPGWS (69 aa)) form a DNA-binding region, HMG box. The short motif at 425 to 430 (KKKKRK) is the Nuclear localization signal element. The segment at 459-505 (SAPKKCRARFGLDQQNNWCGPCRRKKKCVRYIQGEGSCLSPPSSDGS) is promoter-specific activation domain. The segment covering 496–508 (CLSPPSSDGSLLD) has biased composition (low complexity). A Glycyl lysine isopeptide (Lys-Gly) (interchain with G-Cter in SUMO2) cross-link involves residue K539. Over residues 574-603 (DLPPAALQPAAPSSSIAQPSTSSLHSHSSL) the composition is skewed to low complexity. Polar residues predominate over residues 604 to 619 (AGTQPQPLSLVTKSLE).

Belongs to the TCF/LEF family. In terms of assembly, interacts with TGFB1I1. Interacts with CTNNB1 (via the armadillo repeat); forms stable transcription complex. Interacts with EP300. Interacts with NLK. Interacts with CCDC85B (probably through the HMG box); prevents interaction with CTNNB1. Interacts with TNIK. Interacts with MAD2L2; prevents TCF7L2/TCF4 binding to promZIPK/DAPK3oters, negatively modulating its transcriptional activity. Interacts with ZIPK/DAPK3. Interacts with XIAP/BIRC4 and TLE3. Interacts with DDIT3/CHOP. The CTNNB1 and TCF7L2/TCF4 complex interacts with PML (isoform PML-4). Identified in a complex with CTNNB1 and FERMT2. Interacts with SPIN1. Interacts with C11orf84/SPINDOC in a SPIN1-dependent manner. Interacts with DAZAP2; the interaction results in localization of DAZAP2 to the nucleus. In terms of processing, in vitro, phosphorylated by TNIK. Post-translationally, phosphorylated at Thr-201 and/or Thr-212 by NLK. Phosphorylation by NLK at these sites inhibits DNA-binding by TCF7L2/TCF4, thereby preventing transcriptional activation of target genes of the canonical Wnt/beta-catenin signaling pathway. Polysumoylated. Sumoylation is enhanced by PIAS family members and desumoylation is enhanced by SENP2. Sumoylation/desumoylation regulates TCF7L2/TCF4 transcription activity in the Wnt/beta-catenin signaling pathway without altering interaction with CTNNB1 nor binding to DNA. In terms of tissue distribution, detected in epithelium from small intestine, with the highest expression at the top of the crypts and a gradient of expression from crypt to villus. Detected in colon epithelium and colon cancer, and in epithelium from mammary gland and carcinomas derived therefrom.

The protein resides in the nucleus. It localises to the PML body. Functionally, participates in the Wnt signaling pathway and modulates MYC expression by binding to its promoter in a sequence-specific manner. Acts as a repressor in the absence of CTNNB1, and as activator in its presence. Activates transcription from promoters with several copies of the Tcf motif 5'-CCTTTGATC-3' in the presence of CTNNB1. TLE1, TLE2, TLE3 and TLE4 repress transactivation mediated by TCF7L2/TCF4 and CTNNB1. Expression of dominant-negative mutants results in cell-cycle arrest in G1. Necessary for the maintenance of the epithelial stem-cell compartment of the small intestine. The protein is Transcription factor 7-like 2 (TCF7L2) of Homo sapiens (Human).